The following is a 403-amino-acid chain: Phosphopentomutase (403 aa).

6 residues coordinate Mn(2+): D13, D298, H303, D339, H340, and H351.

Belongs to the phosphopentomutase family. It depends on Mn(2+) as a cofactor.

It localises to the cytoplasm. It carries out the reaction 2-deoxy-alpha-D-ribose 1-phosphate = 2-deoxy-D-ribose 5-phosphate. The catalysed reaction is alpha-D-ribose 1-phosphate = D-ribose 5-phosphate. It functions in the pathway carbohydrate degradation; 2-deoxy-D-ribose 1-phosphate degradation; D-glyceraldehyde 3-phosphate and acetaldehyde from 2-deoxy-alpha-D-ribose 1-phosphate: step 1/2. Its function is as follows. Isomerase that catalyzes the conversion of deoxy-ribose 1-phosphate (dRib-1-P) and ribose 1-phosphate (Rib-1-P) to deoxy-ribose 5-phosphate (dRib-5-P) and ribose 5-phosphate (Rib-5-P), respectively. The chain is Phosphopentomutase from Streptococcus pneumoniae serotype 2 (strain D39 / NCTC 7466).